The primary structure comprises 345 residues: 3-isopropylmalate dehydrogenase (345 aa).

Positions 94, 104, 130, and 215 each coordinate substrate. Positions 215, 239, and 243 each coordinate Mg(2+). 273–285 (GSAPDIAGKGIAN) contributes to the NAD(+) binding site.

The protein belongs to the isocitrate and isopropylmalate dehydrogenases family. LeuB type 1 subfamily. Homodimer. Mg(2+) serves as cofactor. Mn(2+) is required as a cofactor.

The protein localises to the cytoplasm. It carries out the reaction (2R,3S)-3-isopropylmalate + NAD(+) = 4-methyl-2-oxopentanoate + CO2 + NADH. The protein operates within amino-acid biosynthesis; L-leucine biosynthesis; L-leucine from 3-methyl-2-oxobutanoate: step 3/4. Functionally, catalyzes the oxidation of 3-carboxy-2-hydroxy-4-methylpentanoate (3-isopropylmalate) to 3-carboxy-4-methyl-2-oxopentanoate. The product decarboxylates to 4-methyl-2 oxopentanoate. This is 3-isopropylmalate dehydrogenase (leuB) from Lactococcus lactis subsp. lactis (strain IL1403) (Streptococcus lactis).